Here is a 324-residue protein sequence, read N- to C-terminus: DNA primase small subunit PriS (324 aa).

Catalysis depends on residues D94, D96, and D274.

This sequence belongs to the eukaryotic-type primase small subunit family. Heterodimer of a small subunit (PriS) and a large subunit (PriL). Requires Mg(2+) as cofactor. Mn(2+) is required as a cofactor.

Functionally, catalytic subunit of DNA primase, an RNA polymerase that catalyzes the synthesis of short RNA molecules used as primers for DNA polymerase during DNA replication. The small subunit contains the primase catalytic core and has DNA synthesis activity on its own. Binding to the large subunit stabilizes and modulates the activity, increasing the rate of DNA synthesis while decreasing the length of the DNA fragments, and conferring RNA synthesis capability. The DNA polymerase activity may enable DNA primase to also catalyze primer extension after primer synthesis. May also play a role in DNA repair. In Methanobrevibacter smithii (strain ATCC 35061 / DSM 861 / OCM 144 / PS), this protein is DNA primase small subunit PriS.